The chain runs to 526 residues: Transcription factor MYC1 (526 aa).

The interval 330–351 (MFPSQNSGLNQDDPSDRRKENE) is disordered. Residues 332–341 (PSQNSGLNQD) show a composition bias toward polar residues. A bHLH domain is found at 333–382 (SQNSGLNQDDPSDRRKENEKFSVLRTMVPTVNEVDKESILNNTIKYLQEL).

As to quaternary structure, homodimer. Interacts with MYB75/PAP1, MYB90/PAP2, MYB4, MYB5, MYB6, MYB23, MYB82, MYB113, MYB114, TT2, MYB0/GL1, and MYB66/WER. As to expression, mostly expressed in developing seeds. Also detected in stems and leaves.

It localises to the nucleus. Its function is as follows. Trancsription activator, when associated with MYB75/PAP1 or MYB90/PAP2. The sequence is that of Transcription factor MYC1 (BHLH12) from Arabidopsis thaliana (Mouse-ear cress).